The chain runs to 1702 residues: Immunoglobulin A1 protease autotransporter (1702 aa).

A signal peptide spans 1-25; it reads MLNKKFKLNFIALTVAYALTPYTEA. The Peptidase S6 domain maps to 26–332; it reads ALVRDDVDYQ…NIYKPEFAKT (307 aa). Ser-288 is a catalytic residue. The disordered stretch occupies residues 991–1411; that stretch reads VEKRNQTVDT…GSDRSTVALR (421 aa). A compositionally biased stretch (polar residues) spans 997–1021; that stretch reads TVDTTNITTPNNIQADVPSVPSNNE. Residues 1037-1047 are compositionally biased toward low complexity; the sequence is TPSETTETVAE. Basic and acidic residues predominate over residues 1049-1061; it reads SKQESKTVEKNEQ. Residues 1082 to 1095 are compositionally biased toward polar residues; the sequence is KANTQTNEVAQSGS. Composition is skewed to basic and acidic residues over residues 1104–1132 and 1150–1162; these read EIKE…KDEI and APKE…KVEE. Repeat copies occupy residues 1109–1116 and 1117–1124. Residues 1109-1124 are 2 X 8 AA tandem repeats of A-K-V-E-K-E-E-K; the sequence is AKVEKEEKAKVEKEEK. 2 stretches are compositionally biased toward polar residues: residues 1163 to 1186 and 1207 to 1218; these read TQVQ…SPNS and VSKNQTENTTDQ. Basic and acidic residues predominate over residues 1219–1234; it reads PTEREKTAKVETEKTQ. Polar residues-rich tracts occupy residues 1235–1255, 1263–1305, and 1316–1341; these read EPPQ…TVQP, NVPT…TAIT, and TETA…VANN. Low complexity predominate over residues 1360–1378; it reads ETSAEETTAASTDETTIAD. The span at 1382-1392 shows a compositional bias: basic residues; it reads RSKPNRRSRRS. Positions 1450–1702 constitute an Autotransporter domain; it reads NNEGQYNVWV…TAELKLSFSF (253 aa).

It localises to the periplasm. Its subcellular location is the secreted. The protein resides in the cell surface. It is found in the cell outer membrane. The catalysed reaction is Cleavage of immunoglobulin A molecules at certain Pro-|-Xaa bonds in the hinge region. No small molecule substrates are known.. Functionally, virulence factor; cleaves host immunoglobulin A producing intact Fc and Fab fragments. In Haemophilus influenzae, this protein is Immunoglobulin A1 protease autotransporter (iga).